Reading from the N-terminus, the 38-residue chain is Large ribosomal subunit protein bL36 (38 aa).

It belongs to the bacterial ribosomal protein bL36 family.

In Karelsulcia muelleri (strain GWSS) (Sulcia muelleri), this protein is Large ribosomal subunit protein bL36.